The chain runs to 391 residues: Succinate--CoA ligase [ADP-forming] subunit beta (391 aa).

The ATP-grasp domain occupies 9 to 246 (KHLFTEAGIA…LTQEDETEVR (238 aa)). Residues lysine 46, 53–55 (GRG), glutamate 99, leucine 102, and glutamate 107 contribute to the ATP site. The Mg(2+) site is built by asparagine 199 and aspartate 213. Substrate is bound by residues asparagine 266 and 323 to 325 (GIV).

It belongs to the succinate/malate CoA ligase beta subunit family. In terms of assembly, heterotetramer of two alpha and two beta subunits. The cofactor is Mg(2+).

The catalysed reaction is succinate + ATP + CoA = succinyl-CoA + ADP + phosphate. It carries out the reaction GTP + succinate + CoA = succinyl-CoA + GDP + phosphate. The protein operates within carbohydrate metabolism; tricarboxylic acid cycle; succinate from succinyl-CoA (ligase route): step 1/1. Succinyl-CoA synthetase functions in the citric acid cycle (TCA), coupling the hydrolysis of succinyl-CoA to the synthesis of either ATP or GTP and thus represents the only step of substrate-level phosphorylation in the TCA. The beta subunit provides nucleotide specificity of the enzyme and binds the substrate succinate, while the binding sites for coenzyme A and phosphate are found in the alpha subunit. This is Succinate--CoA ligase [ADP-forming] subunit beta from Halorhodospira halophila (strain DSM 244 / SL1) (Ectothiorhodospira halophila (strain DSM 244 / SL1)).